The chain runs to 60 residues: Beta-toxin BotIT2 (60 aa).

The region spanning D1 to C60 is the LCN-type CS-alpha/beta domain. 4 cysteine pairs are disulfide-bonded: C10–C60, C14–C35, C21–C42, and C25–C44.

This sequence belongs to the long (4 C-C) scorpion toxin superfamily. Sodium channel inhibitor family. Beta subfamily. Expressed by the venom gland.

It localises to the secreted. Functionally, beta toxins bind voltage-independently at site-4 of sodium channels (Nav) and shift the voltage of activation toward more negative potentials thereby affecting sodium channel activation and promoting spontaneous and repetitive firing. This toxin specifically acts by inducing a new current with very slow activation/deactivation kinetics due to the transformation of normal fast channels into slow ones. It possess properties of excitatory and depressant toxins. It is highly active on insects and less active on mammals. This chain is Beta-toxin BotIT2, found in Buthus occitanus tunetanus (Common European scorpion).